A 235-amino-acid polypeptide reads, in one-letter code: Small ribosomal subunit protein uS2 (235 aa).

Belongs to the universal ribosomal protein uS2 family.

The polypeptide is Small ribosomal subunit protein uS2 (Synechococcus sp. (strain RCC307)).